A 270-amino-acid polypeptide reads, in one-letter code: Probable inner membrane protein BTH_II0599 (270 aa).

A run of 6 helical transmembrane segments spans residues 24-44 (RNPL…MLVS), 45-65 (LVPV…AVGF), 98-118 (LLTL…CSAL), 150-170 (ALIA…APVL), 198-218 (VYGL…AALM), and 226-246 (YALM…YCSF).

It localises to the cell inner membrane. (Microbial infection) Probably transports the toxic C-terminal region of CdiA-2 from B.pseudomallei strain 1026b across the inner membrane to the cytoplasm, where CdiA has a toxic effect. Expression in E.coli makes the bacteria sensitive to the tRNase domain of B.pseudomallei strain 1026b CdiA-2. In Burkholderia thailandensis (strain ATCC 700388 / DSM 13276 / CCUG 48851 / CIP 106301 / E264), this protein is Probable inner membrane protein BTH_II0599.